Here is a 132-residue protein sequence, read N- to C-terminus: Large ribosomal subunit protein uL14 (132 aa).

It belongs to the universal ribosomal protein uL14 family. In terms of assembly, part of the 50S ribosomal subunit. Forms a cluster with proteins L3 and L24e, part of which may contact the 16S rRNA in 2 intersubunit bridges.

Binds to 23S rRNA. Forms part of two intersubunit bridges in the 70S ribosome. The chain is Large ribosomal subunit protein uL14 from Picrophilus torridus (strain ATCC 700027 / DSM 9790 / JCM 10055 / NBRC 100828 / KAW 2/3).